A 250-amino-acid polypeptide reads, in one-letter code: Probable transcriptional regulatory protein Ctha_1786 (250 aa).

The protein belongs to the TACO1 family.

The protein localises to the cytoplasm. This Chloroherpeton thalassium (strain ATCC 35110 / GB-78) protein is Probable transcriptional regulatory protein Ctha_1786.